A 375-amino-acid polypeptide reads, in one-letter code: uncharacterized protein (375 aa).

It belongs to the IMPDH/GMPR family.

This is an uncharacterized protein from Mycobacterium tuberculosis (strain CDC 1551 / Oshkosh).